Reading from the N-terminus, the 589-residue chain is Aspartate--tRNA ligase 2 (589 aa).

Position 174 (Glu-174) interacts with L-aspartate. Residues 198-201 are aspartate; the sequence is QITK. Position 220 (Arg-220) interacts with L-aspartate. ATP-binding positions include 220–222 and Gln-229; that span reads RDE. His-443 lines the L-aspartate pocket. Glu-477 contacts ATP. Arg-484 provides a ligand contact to L-aspartate. 529-532 contacts ATP; that stretch reads GLDR.

It belongs to the class-II aminoacyl-tRNA synthetase family. Type 1 subfamily. Homodimer.

It is found in the cytoplasm. The enzyme catalyses tRNA(Asp) + L-aspartate + ATP = L-aspartyl-tRNA(Asp) + AMP + diphosphate. Functionally, catalyzes the attachment of L-aspartate to tRNA(Asp) in a two-step reaction: L-aspartate is first activated by ATP to form Asp-AMP and then transferred to the acceptor end of tRNA(Asp). This Streptococcus mutans serotype c (strain ATCC 700610 / UA159) protein is Aspartate--tRNA ligase 2.